Consider the following 279-residue polypeptide: Pantothenate synthetase (279 aa).

Position 26-33 (26-33) interacts with ATP; sequence MGALHSGH. The Proton donor role is filled by His-33. Position 57 (Gln-57) interacts with (R)-pantoate. Residue Gln-57 coordinates beta-alanine. ATP is bound at residue 147 to 150; it reads GQKD. Gln-153 is a binding site for (R)-pantoate. ATP-binding positions include Ile-176 and 184–187; that span reads ESSR.

It belongs to the pantothenate synthetase family. As to quaternary structure, homodimer.

It localises to the cytoplasm. The catalysed reaction is (R)-pantoate + beta-alanine + ATP = (R)-pantothenate + AMP + diphosphate + H(+). It participates in cofactor biosynthesis; (R)-pantothenate biosynthesis; (R)-pantothenate from (R)-pantoate and beta-alanine: step 1/1. Functionally, catalyzes the condensation of pantoate with beta-alanine in an ATP-dependent reaction via a pantoyl-adenylate intermediate. This chain is Pantothenate synthetase, found in Corynebacterium glutamicum (strain R).